Reading from the N-terminus, the 316-residue chain is Zinc finger protein 330 (316 aa).

The disordered stretch occupies residues Met-1–Ala-24. A Nuclear localization signal motif is present at residues Lys-3 to Lys-11. The segment covering Lys-10–Leu-22 has biased composition (basic and acidic residues). C4-type zinc fingers lie at residues Cys-42 to Cys-58, Cys-67 to Cys-104, Cys-129 to Cys-149, and Cys-175 to Cys-189. A disordered region spans residues Ser-227 to Asn-299. Acidic residues predominate over residues Asp-268–Ser-291. The residue at position 287 (Ser-287) is a Phosphoserine.

It belongs to the NOA36 family.

The protein resides in the nucleus. The protein localises to the nucleolus. It localises to the chromosome. Its subcellular location is the centromere. This Mus musculus (Mouse) protein is Zinc finger protein 330 (Znf330).